The chain runs to 4080 residues: Hybrid PKS-NRPS synthetase poxE (4080 aa).

Residues 8–442 (REPIAIVGSG…GTNAHAIIEA (435 aa)) enclose the Ketosynthase family 3 (KS3) domain. Active-site for beta-ketoacyl synthase activity residues include Cys-181, His-320, and His-362. The interval 554-878 (VFTGQGAQWA…QRGMNDVEAM (325 aa)) is malonyl-CoA:ACP transacylase (MAT) domain. The tract at residues 944 to 1078 (HPILGTRCPD…GRLVITYGPV (135 aa)) is N-terminal hotdog fold. Positions 944 to 1246 (HPILGTRCPD…AVPLEATNAD (303 aa)) constitute a PKS/mFAS DH domain. The interval 945–1243 (PILGTRCPDG…GIHAVPLEAT (299 aa)) is dehydratase (DH) domain. Residue His-976 is the Proton acceptor; for dehydratase activity of the active site. Residues 1093-1246 (MVDVPSERFY…AVPLEATNAD (154 aa)) are C-terminal hotdog fold. Catalysis depends on Asp-1152, which acts as the Proton donor; for dehydratase activity. A methyltransferase (MT) domain region spans residues 1400 to 1585 (HFSDYLASVV…GVDTFTSDAD (186 aa)). The segment at 2118 to 2292 (TYWLVGLTGS…AGSVMNIGAI (175 aa)) is ketoreductase (KR)domain. Residues 2399-2478 (TTDEIYEVIK…TIGEIIKFVL (80 aa)) are peptidyl carrier protein. The 77-residue stretch at 2405–2481 (EVIKECFIVK…EIIKFVLEKL (77 aa)) folds into the Carrier 1 domain. O-(pantetheine 4'-phosphoryl)serine is present on Ser-2441. The disordered stretch occupies residues 2488-2569 (SLGLSPPTGA…AASPSIHTEE (82 aa)). A compositionally biased stretch (basic and acidic residues) spans 2511 to 2525 (VVVERRNVPRLEKKI). Positions 2528-2545 (SAGSRTSSSVTGTSKSVS) are enriched in low complexity. A compositionally biased stretch (polar residues) spans 2551 to 2565 (DTASSQTSEAASPSI). The condensation stretch occupies residues 2607–3036 (KEPLSFGQSR…DSKQPGGHVS (430 aa)). The interval 3069-3478 (DMAKQYPQKL…DGRLRIEGRI (410 aa)) is adenylation. A Carrier 2 domain is found at 3593 to 3673 (AHLNEAQAQM…KMALLIKPQE (81 aa)). The thiolation stretch occupies residues 3598–3670 (AQAQMVQLWE…TLEKMALLIK (73 aa)). Ser-3633 is modified (O-(pantetheine 4'-phosphoryl)serine). The reductase (RED) domain stretch occupies residues 3740–3959 (LTGATGFIGQ…DFVPVEQVVR (220 aa)).

It in the C-terminal section; belongs to the NRP synthetase family.

Its pathway is secondary metabolite biosynthesis. Its function is as follows. Hybrid PKS-NRPS synthetase; part of the gene cluster that mediates the biosynthesis of oxaleimides, cytotoxic compounds containing an unusual disubstituted succinimide moiety. The first step of the pathway is provided by the HR-PKS poxF that serves in a new mode of collaborative biosynthesis with the PKS-NRPS poxE, by providing the olefin containing amino acid substrate via the synthesis of an ACP-bound dec-4-enoate. The cytochrome P450 monooxygenase poxM-catalyzed oxidation at the alpha-position creates the enzyme-bound 2-hydroxydec-4-enoyl-ACP thioester, which may be prone to spontaneous hydrolysis to yield 2-hydroxydec-4-enoic acid due to increased electrophilicity of the carbonyl. 2-hydroxydec-4-enoic acid can then be further oxidized by poxM to yield the alpha-ketoacid 2-oxodec-4-enoicacid, which is reductively aminated by the aminotransferase poxL to yield (S,E)-2-aminodec-4-enoic acid. The Hybrid PKS-NRPS synthetase poxE then performs condensation between the octaketide product of its PKS modules and the amino group of (S,E)-2-aminodec-4-enoic acid which is activated and incorporated by the adenylation domain. The resulting aminoacyl product can be cyclized by the Diels-Alderase PoxQ and reductively released by the reductive (R) domain of poxE to yield an aldehyde intermediate. The released aldehyde is then substrate for a Knoevenagel condensation by the hydrolyase poxO followed by an oxidation at the 5-position of the pyrrolidone ring. The presence of the olefin from the amino acid building block allows for migration of the substituted allyl group to occur. This allylic transposition reaction takes place in a conjugate addition, semipinacol-like fashion to yield a succinimide intermediate. Iterative two-electron oxidations of the C7 methyl of the succinimide intermediate to the carboxylic acid can be catalyzed by one of two remaining cytochrome P450 monooxygenasess poxC or poxD to yield oxaleimide A. Subsequent oxidation yields the maleimide scaffold oxaleimide I. Both oxaleimide A and oxaleimide I can undergo oxidative modifications in the decalin ring to yield the series of products oxaleimides B to H. The chain is Hybrid PKS-NRPS synthetase poxE from Penicillium oxalicum (strain 114-2 / CGMCC 5302) (Penicillium decumbens).